The sequence spans 706 residues: Choline transporter-like protein 2 (706 aa).

Over 1–33 (MGKEQQLYYGKHGTPQKYDPAFRGPIYNRGCTD) the chain is Cytoplasmic. Position 14 is a phosphothreonine (Thr14). The helical transmembrane segment at 34–54 (IICCVFLFLAIVGYVAVGIIA) threads the bilayer. The Extracellular segment spans residues 55 to 232 (WTHGDPRKVI…RIFEDYTVSW (178 aa)). Residues Asn187 and Asn200 are each glycosylated (N-linked (GlcNAc...) asparagine). Residues 233 to 253 (YWIIIGLIIAMVLSLLFIILL) form a helical membrane-spanning segment. Over 254–256 (RFL) the chain is Cytoplasmic. Residues 257-277 (AGIMVWVMIVMVILVLGYGIL) form a helical membrane-spanning segment. At 278–315 (HCYMEYARLRGEAGSDVSLVDLGFQTDFRVYLHLRQTW) the chain is on the extracellular side. A helical membrane pass occupies residues 316–336 (VAFMIILSIVEVIIILLLIFL). Residues 337 to 364 (RKRILIAIALIKEASRAVGYVMCSLLYP) lie on the Cytoplasmic side of the membrane. Residues 365–385 (LVTFFLLCLCIAYWASTAIFL) form a helical membrane-spanning segment. Residues 386–457 (STSNEAVYKI…FNVFMFFWLA (72 aa)) are Extracellular-facing. 2 N-linked (GlcNAc...) asparagine glycosylation sites follow: Asn397 and Asn417. A helical transmembrane segment spans residues 458 to 480 (NFVLALGQVTLAGAFASYYWAMN). Residues 481–504 (KPDDLPAFPLFSAFGRALRYHTGS) lie on the Cytoplasmic side of the membrane. Residues 505–525 (LAFGSLLLAIVQVIRVILEYL) traverse the membrane as a helical segment. Topologically, residues 526–563 (DQRLKAAENKFAKFLMSCLKCCFWCLEKFIKFLNRNAY) are extracellular. A helical transmembrane segment spans residues 564 to 584 (IMIAIYGTNFCTSARNAFFLL). The Cytoplasmic segment spans residues 585 to 599 (MRNIIRVAVLDKVTD). A helical membrane pass occupies residues 600-620 (FLFLLGKLLIVGSVGILAFFF). At 621 to 638 (FTHRIRIVQDTAPSLNYY) the chain is on the extracellular side. The helical transmembrane segment at 639 to 659 (WVPVVTVVIGSYLIAHGFFSV) threads the bilayer. At 660–706 (YGMCVDTLFLCFLEDLERNDGTPERPYFMSLTLKKILNKTNKRQAEA) the chain is on the cytoplasmic side.

The protein belongs to the CTL (choline transporter-like) family. As to quaternary structure, interacts with COCH. Post-translationally, N-glycosylated.

Its subcellular location is the cell membrane. The protein resides in the mitochondrion outer membrane. It catalyses the reaction choline(out) + n H(+)(in) = choline(in) + n H(+)(out). The catalysed reaction is ethanolamine(out) + n H(+)(in) = ethanolamine(in) + n H(+)(out). In terms of biological role, choline/H+ antiporter, mainly in mitochodria. Also acts as a low-affinity ethanolamine/H+ antiporter, regulating the supply of extracellular ethanolamine (Etn) for the CDP-Etn pathway, redistribute intracellular Etn and balance the CDP-Cho and CDP-Etn arms of the Kennedy pathway. The sequence is that of Choline transporter-like protein 2 (SLC44A2) from Bos taurus (Bovine).